A 769-amino-acid chain; its full sequence is Type IV pilus biogenesis and competence protein PilQ (769 aa).

The N-terminal stretch at 1-24 is a signal peptide; the sequence is MNTKLTKIISGLFVATAAFQTASA. Low complexity-rich tracts occupy residues 135-154 and 197-225; these read ARPA…AAAP and ASAK…PAKQ. Disordered stretches follow at residues 135-156 and 197-228; these read ARPA…APST and ASAK…QTNI.

Belongs to the bacterial secretin family. PilQ subfamily. Homododecamer. Tetramer of trimer.

It is found in the cell outer membrane. In terms of biological role, required for type IV pilus biogenesis and competence. Could function as a pore for exit of the pilus but also as a channel for entry of heme and antimicrobial agents and uptake of transforming DNA. The polypeptide is Type IV pilus biogenesis and competence protein PilQ (pilQ) (Neisseria meningitidis serogroup B (strain ATCC BAA-335 / MC58)).